The chain runs to 111 residues: UPF0122 protein CKR_1296 (111 aa).

It belongs to the UPF0122 family.

Might take part in the signal recognition particle (SRP) pathway. This is inferred from the conservation of its genetic proximity to ftsY/ffh. May be a regulatory protein. In Clostridium kluyveri (strain NBRC 12016), this protein is UPF0122 protein CKR_1296.